Here is a 407-residue protein sequence, read N- to C-terminus: Zinc finger protein 174 (407 aa).

The disordered stretch occupies residues 1–20; it reads MAAKMEITLSSNTEASSKQE. Lys26 participates in a covalent cross-link: Glycyl lysine isopeptide (Lys-Gly) (interchain with G-Cter in SUMO2). The SCAN box domain occupies 59–124; that stretch reads GPQEALSQLR…KEIVTLVEDF (66 aa). The tract at residues 150-270 is disordered; it reads GSQLGEQELP…RRQVSSPNAQ (121 aa). Lys204 is covalently cross-linked (Glycyl lysine isopeptide (Lys-Gly) (interchain with G-Cter in SUMO2)). Residues 211–221 are compositionally biased toward basic and acidic residues; that stretch reads PRMRSDNKENP. Glycyl lysine isopeptide (Lys-Gly) (interchain with G-Cter in SUMO2) cross-links involve residues Lys230 and Lys271. 3 consecutive C2H2-type zinc fingers follow at residues 326–348, 354–376, and 382–405; these read YKCD…KRVH, YTCG…QRIH, and YQCG…RLHH.

Belongs to the krueppel C2H2-type zinc-finger protein family. Homodimer. In terms of tissue distribution, expressed in a variety of organs, but most strongly in adult testis and ovary followed by small intestine, colon, prostate, thymus, spleen, pancreas, skeletal muscle, heart, brain and kidney. Also expressed in umbilical vein endothelial cells, foreskin fibroblast and Hep-G2 cells.

It localises to the nucleus. In terms of biological role, transcriptional repressor. In Homo sapiens (Human), this protein is Zinc finger protein 174 (ZNF174).